A 160-amino-acid polypeptide reads, in one-letter code: MAPK regulated corepressor interacting protein 2 (160 aa).

Residue methionine 1 is modified to N-acetylmethionine. Residues 1-22 (MYTITKGPSKLVAQRRTGPTQQ) form a disordered region. An Omega-N-methylarginine modification is found at arginine 35. Positions 43-64 (LPAHLQPSAQTQGPWPLASSGP) are disordered. Serine 61 is modified (phosphoserine). Arginine 65 bears the Omega-N-methylarginine mark. Position 82 is a phosphoserine (serine 82).

It belongs to the MCRIP family. Interacts with DDX6. Interacts with MCRIP1.

It is found in the cytoplasm. The protein localises to the stress granule. The protein resides in the nucleus. In Mus musculus (Mouse), this protein is MAPK regulated corepressor interacting protein 2 (Mcrip2).